Reading from the N-terminus, the 282-residue chain is Undecaprenyl-diphosphatase (282 aa).

Transmembrane regions (helical) follow at residues 2–22 (FDFIKSIIIGIVEGLTEFLPV), 47–67 (FTAVFDYAIQLGAIFAVIQLY), 90–110 (WIKVIVGVLPAMVFGLLLNNF), 115–135 (LLNPWVVSATLIIYGIAFIVI), 152–172 (ITFKMALFIGLFQVLSLVPGT), 190–210 (FVAAEFSFFLSIPVMFGVTIL), 225–245 (AQLFVMLIGFVVSWVVALFAI), and 259–279 (IFGWYRIVVGILFLILGIAGL).

Belongs to the UppP family.

The protein resides in the cell membrane. The enzyme catalyses di-trans,octa-cis-undecaprenyl diphosphate + H2O = di-trans,octa-cis-undecaprenyl phosphate + phosphate + H(+). Its function is as follows. Catalyzes the dephosphorylation of undecaprenyl diphosphate (UPP). Confers resistance to bacitracin. The chain is Undecaprenyl-diphosphatase from Leuconostoc citreum (strain KM20).